Consider the following 747-residue polypeptide: Superkiller protein 7 (747 aa).

Residues 14 to 51 (KSKGLLSADQSHSTSKSASLLERLHKNRETKDNNAETK) form a disordered region. Residues 21 to 31 (ADQSHSTSKSA) show a composition bias toward polar residues. Positions 35–51 (ERLHKNRETKDNNAETK) are enriched in basic and acidic residues. 2 positions are modified to phosphoserine: S88 and S90. Residues 89–117 (NSDLEKQGKSVTLDSKENELPTKRKSPDD) form a disordered region. A tr-type G domain is found at 265 to 503 (PLNLTCLFLG…YVPEWYEGPT (239 aa)). Residues 274-281 (GDTNAGKS) form a G1 region. A GTP-binding site is contributed by 274 to 281 (GDTNAGKS). A G2 region spans residues 331 to 335 (GFSMF). The tract at residues 356-359 (DTPG) is G3. GTP is bound by residues 356–360 (DTPGS) and 427–430 (NKAD). A G4 region spans residues 427 to 430 (NKAD). The segment at 467–469 (SGL) is G5.

This sequence belongs to the TRAFAC class translation factor GTPase superfamily. Classic translation factor GTPase family. In terms of assembly, interacts with the exosome and with the SKI complex composed of at least SKI2, SKI3 and SKI8. Interacts directly with SKI3 and SKI8.

The protein resides in the cytoplasm. In terms of biological role, represses the expression of non-poly(A) mRNAs like L-A or M viruses and is therefore involved in antiviral system. Mediates interactions via its N-terminus between the exosome and the SKI complex which operate in the 3'-to-5' mRNA-decay pathway. By interacting with NAM7, is also required for nonsense-mediated 3'-to-5' mRNA-decay (NMD). May recognize a stalled 80S ribosome at the 3'-end of a nonstop mRNA which leads to the recruitment of the exosome and SKI complexes to the mRNAs to be degraded. In Saccharomyces cerevisiae (strain ATCC 204508 / S288c) (Baker's yeast), this protein is Superkiller protein 7 (SKI7).